Reading from the N-terminus, the 127-residue chain is uncharacterized protein (127 aa).

3 helical membrane passes run 20-42, 54-76, and 91-110; these read NMIW…FMSS, IYFC…IFVY, and WILI…ASFT.

It is found in the membrane. The protein resides in the cytoplasm. This is an uncharacterized protein from Schizosaccharomyces pombe (strain 972 / ATCC 24843) (Fission yeast).